A 107-amino-acid polypeptide reads, in one-letter code: MSQFTLADLERIVAERASVTDGTSYTASLVAKGQPKAAQKLGEEAVETVIAAVSGDRAGVVSESADLLYHLAVVWNIAGVALEDVLQELQRRTAQTGLAEKASRPKG.

The protein belongs to the PRA-PH family.

It localises to the cytoplasm. The catalysed reaction is 1-(5-phospho-beta-D-ribosyl)-ATP + H2O = 1-(5-phospho-beta-D-ribosyl)-5'-AMP + diphosphate + H(+). It participates in amino-acid biosynthesis; L-histidine biosynthesis; L-histidine from 5-phospho-alpha-D-ribose 1-diphosphate: step 2/9. This is Phosphoribosyl-ATP pyrophosphatase from Brucella abortus (strain S19).